The sequence spans 354 residues: UPF0597 protein PPA0217 (354 aa).

It belongs to the UPF0597 family.

The sequence is that of UPF0597 protein PPA0217 from Cutibacterium acnes (strain DSM 16379 / KPA171202) (Propionibacterium acnes).